A 716-amino-acid polypeptide reads, in one-letter code: Polyribonucleotide nucleotidyltransferase (716 aa).

Asp486 and Asp492 together coordinate Mg(2+). The KH domain maps to 553–612; sequence PHIYNIKINPEKIKDVIGKGGAVIRALSDETDTKIDISDDGNITIAALSQKSAAFAQQRI. The 69-residue stretch at 622 to 690 folds into the S1 motif domain; sequence GRIYQGTVTR…RQGRIRLSIK (69 aa).

It belongs to the polyribonucleotide nucleotidyltransferase family. Component of the RNA degradosome, which is a multiprotein complex involved in RNA processing and mRNA degradation. Mg(2+) is required as a cofactor.

The protein resides in the cytoplasm. The catalysed reaction is RNA(n+1) + phosphate = RNA(n) + a ribonucleoside 5'-diphosphate. Involved in mRNA degradation. Catalyzes the phosphorolysis of single-stranded polyribonucleotides processively in the 3'- to 5'-direction. The sequence is that of Polyribonucleotide nucleotidyltransferase from Hamiltonella defensa subsp. Acyrthosiphon pisum (strain 5AT).